Consider the following 354-residue polypeptide: UDP-N-acetylglucosamine--N-acetylmuramyl-(pentapeptide) pyrophosphoryl-undecaprenol N-acetylglucosamine transferase (354 aa).

UDP-N-acetyl-alpha-D-glucosamine-binding positions include 11–13 (TAG), Arg-164, Ser-194, and Gln-289.

It belongs to the glycosyltransferase 28 family. MurG subfamily.

The protein localises to the cell membrane. The catalysed reaction is di-trans,octa-cis-undecaprenyl diphospho-N-acetyl-alpha-D-muramoyl-L-alanyl-D-glutamyl-meso-2,6-diaminopimeloyl-D-alanyl-D-alanine + UDP-N-acetyl-alpha-D-glucosamine = di-trans,octa-cis-undecaprenyl diphospho-[N-acetyl-alpha-D-glucosaminyl-(1-&gt;4)]-N-acetyl-alpha-D-muramoyl-L-alanyl-D-glutamyl-meso-2,6-diaminopimeloyl-D-alanyl-D-alanine + UDP + H(+). It functions in the pathway cell wall biogenesis; peptidoglycan biosynthesis. Its function is as follows. Cell wall formation. Catalyzes the transfer of a GlcNAc subunit on undecaprenyl-pyrophosphoryl-MurNAc-pentapeptide (lipid intermediate I) to form undecaprenyl-pyrophosphoryl-MurNAc-(pentapeptide)GlcNAc (lipid intermediate II). The chain is UDP-N-acetylglucosamine--N-acetylmuramyl-(pentapeptide) pyrophosphoryl-undecaprenol N-acetylglucosamine transferase from Lachnospira eligens (strain ATCC 27750 / DSM 3376 / VPI C15-48 / C15-B4) (Eubacterium eligens).